Reading from the N-terminus, the 340-residue chain is Putative RRN3-like protein RRN3P2 (340 aa).

It belongs to the RRN3 family.

This chain is Putative RRN3-like protein RRN3P2 (RRN3P2), found in Homo sapiens (Human).